The primary structure comprises 199 residues: NAD(P)H dehydrogenase (quinone) (199 aa).

The Flavodoxin-like domain occupies 4 to 190 (VLVLYYSSYG…AMARFQGGHV (187 aa)). FMN contacts are provided by residues 10–15 (SSYGHI) and 78–80 (TRF). Y12 contributes to the NAD(+) binding site. Substrate is bound at residue W98. FMN-binding positions include 113-119 (STATQHG) and H134.

This sequence belongs to the WrbA family. The cofactor is FMN.

It carries out the reaction a quinone + NADH + H(+) = a quinol + NAD(+). The catalysed reaction is a quinone + NADPH + H(+) = a quinol + NADP(+). This is NAD(P)H dehydrogenase (quinone) from Azoarcus sp. (strain BH72).